The following is a 1301-amino-acid chain: Dentin sialophosphoprotein (1301 aa).

Residues 1 to 15 form the signal peptide; it reads MKIITYFCIWAVAWA. Residues Asn41 and Asn49 are each glycosylated (N-linked (GlcNAc...) asparagine). The interval 55 to 89 is disordered; that stretch reads KESGVLVHEGDRGRQENTQDGHKGEGNGSKWAEVG. Residues 62–79 show a composition bias toward basic and acidic residues; that stretch reads HEGDRGRQENTQDGHKGE. 7 N-linked (GlcNAc...) asparagine glycosylation sites follow: Asn81, Asn130, Asn150, Asn190, Asn191, Asn209, and Asn222. Residues 146 to 165 show a composition bias toward polar residues; sequence AGATNRSNTNGNTDKNTQNG. The segment at 146–171 is disordered; that stretch reads AGATNRSNTNGNTDKNTQNGDVGDAG. The interval 202 to 1301 is disordered; it reads NSCRNEGNTS…SDSNHSTSDD (1100 aa). A compositionally biased stretch (polar residues) spans 203 to 221; that stretch reads SCRNEGNTSEITPQINSKR. Positions 251–267 are enriched in acidic residues; the sequence is ADEDEDEGSGDDEDEEA. Ser259 bears the Phosphoserine; by CK1 mark. Over residues 271-280 the composition is skewed to polar residues; sequence KDSSNNSKGQ. Asn275 carries an N-linked (GlcNAc...) asparagine glycan. Composition is skewed to basic and acidic residues over residues 281-293 and 300-327; these read EGQDHGKEDDHDS and DSKEYYDPEGKEDPHNEVDGDKTSKSEE. The residue at position 301 (Ser301) is a Phosphoserine. Asn336 carries N-linked (GlcNAc...) asparagine glycosylation. A compositionally biased stretch (basic and acidic residues) spans 340-377; it reads RIEDTQKLNHRESKRVENRITKESETHAVGKSQDKGIE. N-linked (GlcNAc...) asparagine glycosylation is present at Asn387. The segment covering 388 to 404 has biased composition (basic and acidic residues); that stretch reads ITKEVGKGNEGKEDKGQ. Low complexity-rich tracts occupy residues 439 to 452 and 462 to 487; these read SNTGSDSNSDGYDS and GDDPNSSDESNGNDDANSESDNNSSS. The Cell attachment site signature appears at 488–490; it reads RGD. The segment covering 488-506 has biased composition (polar residues); it reads RGDASYNSDESKDNGNGSD. Over residues 518–534 the composition is skewed to low complexity; sequence TSDTNNSDSNGNGNNGN. Residues 536–549 are compositionally biased toward basic and acidic residues; it reads DNDKSDSGKGKSDS. Over residues 555–564 the composition is skewed to low complexity; it reads SDSSNSSDSS. Over residues 581 to 595 the composition is skewed to acidic residues; it reads DSSDSDSSDSSDSDS. The segment covering 596–619 has biased composition (low complexity); it reads SDSSNSSDSSDSSDSSDSSDSSDS. Positions 620–642 are enriched in basic and acidic residues; it reads SDSKSDSSKSESDSSDSDSKSDS. Composition is skewed to low complexity over residues 643–705, 715–1264, 1272–1284, and 1292–1301; these read SDSN…SDSS, SSDS…STSD, QSKSGNGNNNGSD, and SDSNHSTSDD.

In terms of assembly, interacts with FBLN7. DSP is glycosylated. As to expression, expressed in teeth. DPP is synthesized by odontoblast and transiently expressed by pre-ameloblasts.

It is found in the secreted. It localises to the extracellular space. The protein localises to the extracellular matrix. Functionally, DSP may be an important factor in dentinogenesis. DPP may bind high amount of calcium and facilitate initial mineralization of dentin matrix collagen as well as regulate the size and shape of the crystals. The polypeptide is Dentin sialophosphoprotein (DSPP) (Homo sapiens (Human)).